We begin with the raw amino-acid sequence, 102 residues long: NADH-quinone oxidoreductase subunit K (102 aa).

Helical transmembrane passes span 5–25 (IMHY…GIFL), 31–51 (IIIL…FVAF), and 66–86 (FILT…VVFF).

The protein belongs to the complex I subunit 4L family. As to quaternary structure, NDH-1 is composed of 14 different subunits. Subunits NuoA, H, J, K, L, M, N constitute the membrane sector of the complex.

The protein localises to the cell inner membrane. It catalyses the reaction a quinone + NADH + 5 H(+)(in) = a quinol + NAD(+) + 4 H(+)(out). Functionally, NDH-1 shuttles electrons from NADH, via FMN and iron-sulfur (Fe-S) centers, to quinones in the respiratory chain. The immediate electron acceptor for the enzyme in this species is believed to be ubiquinone. Couples the redox reaction to proton translocation (for every two electrons transferred, four hydrogen ions are translocated across the cytoplasmic membrane), and thus conserves the redox energy in a proton gradient. The polypeptide is NADH-quinone oxidoreductase subunit K (Bartonella henselae (strain ATCC 49882 / DSM 28221 / CCUG 30454 / Houston 1) (Rochalimaea henselae)).